The chain runs to 442 residues: Putative aminohydrolase SsnA (442 aa).

Zn(2+) contacts are provided by H62, H64, H227, and D312.

Belongs to the metallo-dependent hydrolases superfamily. ATZ/TRZ family.

The protein is Putative aminohydrolase SsnA (ssnA) of Escherichia coli (strain K12).